The chain runs to 148 residues: UPF0208 membrane protein HD_1715 (148 aa).

Helical transmembrane passes span 41–60 (AARFMPIFACFAILWQYFFT) and 66–88 (ILANAIITSLFAISLPYQGLYWL).

Belongs to the UPF0208 family.

The protein localises to the cell inner membrane. This is UPF0208 membrane protein HD_1715 from Haemophilus ducreyi (strain 35000HP / ATCC 700724).